A 135-amino-acid polypeptide reads, in one-letter code: ATP synthase epsilon chain (135 aa).

This sequence belongs to the ATPase epsilon chain family. F-type ATPases have 2 components, CF(1) - the catalytic core - and CF(0) - the membrane proton channel. CF(1) has five subunits: alpha(3), beta(3), gamma(1), delta(1), epsilon(1). CF(0) has three main subunits: a, b and c.

It localises to the cell inner membrane. In terms of biological role, produces ATP from ADP in the presence of a proton gradient across the membrane. In Bradyrhizobium sp. (strain BTAi1 / ATCC BAA-1182), this protein is ATP synthase epsilon chain.